The following is a 168-amino-acid chain: MISDILAPGLRVVFCGINPGKSSAHTGFHFAHPGNRFWKVIHQAGFTDRQLRPEEELQLLDTRCGITMLVERPTVQASEVALQELRSGGRELVRKIEEYQPQALAVLGKQAFELAFNQRGAKWGKQAMTIGTTQVWVLPNPSGLNRATLDKLVAAYRELDDALATRGQ.

This sequence belongs to the uracil-DNA glycosylase (UDG) superfamily. TDG/mug family. In terms of assembly, binds DNA as a monomer.

It is found in the cytoplasm. The enzyme catalyses Specifically hydrolyzes mismatched double-stranded DNA and polynucleotides, releasing free uracil.. Excises ethenocytosine and uracil, which can arise by alkylation or deamination of cytosine, respectively, from the corresponding mispairs with guanine in ds-DNA. It is capable of hydrolyzing the carbon-nitrogen bond between the sugar-phosphate backbone of the DNA and the mispaired base. The complementary strand guanine functions in substrate recognition. Required for DNA damage lesion repair in stationary-phase cells. This is G/U mismatch-specific DNA glycosylase from Klebsiella pneumoniae subsp. pneumoniae (strain ATCC 700721 / MGH 78578).